The following is a 282-amino-acid chain: Formamidopyrimidine-DNA glycosylase (282 aa).

Residue P2 is the Schiff-base intermediate with DNA of the active site. The active-site Proton donor is E3. Residue K61 is the Proton donor; for beta-elimination activity of the active site. DNA contacts are provided by H93, R112, and K158. An FPG-type zinc finger spans residues 244 to 278 (DAYGREGEGCRRCGAVMHREKFMNRSSFYCPRCQP). R268 serves as the catalytic Proton donor; for delta-elimination activity.

This sequence belongs to the FPG family. Monomer. The cofactor is Zn(2+).

It catalyses the reaction Hydrolysis of DNA containing ring-opened 7-methylguanine residues, releasing 2,6-diamino-4-hydroxy-5-(N-methyl)formamidopyrimidine.. The enzyme catalyses 2'-deoxyribonucleotide-(2'-deoxyribose 5'-phosphate)-2'-deoxyribonucleotide-DNA = a 3'-end 2'-deoxyribonucleotide-(2,3-dehydro-2,3-deoxyribose 5'-phosphate)-DNA + a 5'-end 5'-phospho-2'-deoxyribonucleoside-DNA + H(+). In terms of biological role, involved in base excision repair of DNA damaged by oxidation or by mutagenic agents. Acts as a DNA glycosylase that recognizes and removes damaged bases. Has a preference for oxidized purines, such as 7,8-dihydro-8-oxoguanine (8-oxoG). Has AP (apurinic/apyrimidinic) lyase activity and introduces nicks in the DNA strand. Cleaves the DNA backbone by beta-delta elimination to generate a single-strand break at the site of the removed base with both 3'- and 5'-phosphates. This chain is Formamidopyrimidine-DNA glycosylase, found in Mycobacterium leprae (strain Br4923).